Reading from the N-terminus, the 192-residue chain is Potassium-transporting ATPase KdpC subunit (192 aa).

A helical transmembrane segment spans residues 14-34; the sequence is LTGVLVVLCGLIYPAMVTGIA.

Belongs to the KdpC family. The system is composed of three essential subunits: KdpA, KdpB and KdpC.

The protein localises to the cell membrane. Part of the high-affinity ATP-driven potassium transport (or Kdp) system, which catalyzes the hydrolysis of ATP coupled with the electrogenic transport of potassium into the cytoplasm. This subunit acts as a catalytic chaperone that increases the ATP-binding affinity of the ATP-hydrolyzing subunit KdpB by the formation of a transient KdpB/KdpC/ATP ternary complex. In Bacillus cytotoxicus (strain DSM 22905 / CIP 110041 / 391-98 / NVH 391-98), this protein is Potassium-transporting ATPase KdpC subunit.